We begin with the raw amino-acid sequence, 264 residues long: MKQYLDLCQRILDEGVIKEDRTGTGTTSVFGHQMRFDLSEGFPMVTTKKLHMKSIIHELLWFLSGDTNVRYLQENGVRIWNEWADENGDLGPVYGSQWRSFTGRDGKTVDQIQWVIDEIKRNPDSRRLIVSAWNPAELDKMALPPCHLLFQFYVANGKLSCQLYQRSGDTFLGVPFNIASYALLTHMVAHVTGLEVGDFVHTIGDAHLYLNHIEQVKLQLTREPKPLPKLVLNPDVTSIFDFKYEDIEIVGYESHPHIKGEVAV.

Arginine 21 provides a ligand contact to dUMP. Histidine 51 is a (6R)-5,10-methylene-5,6,7,8-tetrahydrofolate binding site. 126–127 (RR) is a dUMP binding site. The active-site Nucleophile is cysteine 146. DUMP is bound by residues 166–169 (RSGD), asparagine 177, and 207–209 (HLY). Residue aspartate 169 coordinates (6R)-5,10-methylene-5,6,7,8-tetrahydrofolate. Alanine 263 contributes to the (6R)-5,10-methylene-5,6,7,8-tetrahydrofolate binding site.

Belongs to the thymidylate synthase family. Bacterial-type ThyA subfamily. As to quaternary structure, homodimer.

It is found in the cytoplasm. The enzyme catalyses dUMP + (6R)-5,10-methylene-5,6,7,8-tetrahydrofolate = 7,8-dihydrofolate + dTMP. It functions in the pathway pyrimidine metabolism; dTTP biosynthesis. Catalyzes the reductive methylation of 2'-deoxyuridine-5'-monophosphate (dUMP) to 2'-deoxythymidine-5'-monophosphate (dTMP) while utilizing 5,10-methylenetetrahydrofolate (mTHF) as the methyl donor and reductant in the reaction, yielding dihydrofolate (DHF) as a by-product. This enzymatic reaction provides an intracellular de novo source of dTMP, an essential precursor for DNA biosynthesis. In Brevibacillus brevis (strain 47 / JCM 6285 / NBRC 100599), this protein is Thymidylate synthase.